Reading from the N-terminus, the 631-residue chain is Phosphomethylpyrimidine synthase (631 aa).

Residues Asn239, Met268, Tyr297, His333, 353 to 355 (SRG), 394 to 397 (DGLR), and Glu433 contribute to the substrate site. Zn(2+) is bound at residue His437. Residue Tyr460 coordinates substrate. His501 lines the Zn(2+) pocket. [4Fe-4S] cluster-binding residues include Cys581, Cys584, and Cys589.

This sequence belongs to the ThiC family. As to quaternary structure, homodimer. Requires [4Fe-4S] cluster as cofactor.

It catalyses the reaction 5-amino-1-(5-phospho-beta-D-ribosyl)imidazole + S-adenosyl-L-methionine = 4-amino-2-methyl-5-(phosphooxymethyl)pyrimidine + CO + 5'-deoxyadenosine + formate + L-methionine + 3 H(+). Its pathway is cofactor biosynthesis; thiamine diphosphate biosynthesis. In terms of biological role, catalyzes the synthesis of the hydroxymethylpyrimidine phosphate (HMP-P) moiety of thiamine from aminoimidazole ribotide (AIR) in a radical S-adenosyl-L-methionine (SAM)-dependent reaction. The sequence is that of Phosphomethylpyrimidine synthase from Escherichia coli O139:H28 (strain E24377A / ETEC).